The primary structure comprises 373 residues: 4-hydroxy-3-methylbut-2-en-1-yl diphosphate synthase (flavodoxin) (373 aa).

Residues C268, C271, C303, and E310 each contribute to the [4Fe-4S] cluster site.

This sequence belongs to the IspG family. [4Fe-4S] cluster is required as a cofactor.

The enzyme catalyses (2E)-4-hydroxy-3-methylbut-2-enyl diphosphate + oxidized [flavodoxin] + H2O + 2 H(+) = 2-C-methyl-D-erythritol 2,4-cyclic diphosphate + reduced [flavodoxin]. It functions in the pathway isoprenoid biosynthesis; isopentenyl diphosphate biosynthesis via DXP pathway; isopentenyl diphosphate from 1-deoxy-D-xylulose 5-phosphate: step 5/6. Converts 2C-methyl-D-erythritol 2,4-cyclodiphosphate (ME-2,4cPP) into 1-hydroxy-2-methyl-2-(E)-butenyl 4-diphosphate. In Exiguobacterium sp. (strain ATCC BAA-1283 / AT1b), this protein is 4-hydroxy-3-methylbut-2-en-1-yl diphosphate synthase (flavodoxin).